The chain runs to 245 residues: Large ribosomal subunit protein uL3 (245 aa).

Gln-152 carries the post-translational modification N5-methylglutamine. The tract at residues 224-245 is disordered; that stretch reads RSKAVQAEAAAPAEAAAPEGDN. Over residues 230–245 the composition is skewed to low complexity; sequence AEAAAPAEAAAPEGDN.

It belongs to the universal ribosomal protein uL3 family. Part of the 50S ribosomal subunit. Forms a cluster with proteins L14 and L19. In terms of processing, methylated by PrmB.

One of the primary rRNA binding proteins, it binds directly near the 3'-end of the 23S rRNA, where it nucleates assembly of the 50S subunit. The polypeptide is Large ribosomal subunit protein uL3 (Paracoccus denitrificans (strain Pd 1222)).